The primary structure comprises 1209 residues: Pre-mRNA-splicing factor rse1 (1209 aa).

It belongs to the RSE1 family. Associated with the spliceosome.

It localises to the nucleus. In terms of biological role, involved in pre-mRNA splicing and cell cycle control. This Neurospora crassa (strain ATCC 24698 / 74-OR23-1A / CBS 708.71 / DSM 1257 / FGSC 987) protein is Pre-mRNA-splicing factor rse1 (msp-5).